A 940-amino-acid polypeptide reads, in one-letter code: Protein translocase subunit SecA (940 aa).

Residues glutamine 87, 105–109, and aspartate 494 each bind ATP; that span reads GEGKT. The disordered stretch occupies residues 879–940; that stretch reads AQQQKKAVEG…KCHGASEASV (62 aa). The span at 884 to 898 shows a compositional bias: basic and acidic residues; sequence KAVEGRATADGKLDE. Over residues 900–915 the composition is skewed to low complexity; sequence SVAAAARPAAASRPAV. Residues cysteine 921, cysteine 923, cysteine 932, and histidine 933 each contribute to the Zn(2+) site.

The protein belongs to the SecA family. As to quaternary structure, monomer and homodimer. Part of the essential Sec protein translocation apparatus which comprises SecA, SecYEG and auxiliary proteins SecDF-YajC and YidC. Zn(2+) serves as cofactor.

It localises to the cell inner membrane. The protein localises to the cytoplasm. It carries out the reaction ATP + H2O + cellular proteinSide 1 = ADP + phosphate + cellular proteinSide 2.. Its function is as follows. Part of the Sec protein translocase complex. Interacts with the SecYEG preprotein conducting channel. Has a central role in coupling the hydrolysis of ATP to the transfer of proteins into and across the cell membrane, serving as an ATP-driven molecular motor driving the stepwise translocation of polypeptide chains across the membrane. In Myxococcus xanthus (strain DK1622), this protein is Protein translocase subunit SecA.